Consider the following 259-residue polypeptide: tRNA pseudouridine synthase A (259 aa).

The Nucleophile role is filled by Asp-51. Residue Tyr-109 participates in substrate binding.

It belongs to the tRNA pseudouridine synthase TruA family. In terms of assembly, homodimer.

The catalysed reaction is uridine(38/39/40) in tRNA = pseudouridine(38/39/40) in tRNA. Functionally, formation of pseudouridine at positions 38, 39 and 40 in the anticodon stem and loop of transfer RNAs. This is tRNA pseudouridine synthase A from Nitrosococcus oceani (strain ATCC 19707 / BCRC 17464 / JCM 30415 / NCIMB 11848 / C-107).